Consider the following 209-residue polypeptide: Molybdenum cofactor guanylyltransferase (209 aa).

GTP-binding positions include 16–18 (LAG), lysine 28, asparagine 56, aspartate 69, and aspartate 103. Mg(2+) is bound at residue aspartate 103.

Belongs to the MobA family. As to quaternary structure, monomer. Mg(2+) serves as cofactor.

It is found in the cytoplasm. It catalyses the reaction Mo-molybdopterin + GTP + H(+) = Mo-molybdopterin guanine dinucleotide + diphosphate. In terms of biological role, transfers a GMP moiety from GTP to Mo-molybdopterin (Mo-MPT) cofactor (Moco or molybdenum cofactor) to form Mo-molybdopterin guanine dinucleotide (Mo-MGD) cofactor. The polypeptide is Molybdenum cofactor guanylyltransferase (Rhizobium leguminosarum bv. trifolii (strain WSM2304)).